Here is a 254-residue protein sequence, read N- to C-terminus: Persulfide dioxygenase ETHE1, mitochondrial (254 aa).

The N-terminal 7 residues, M1–K7, are a transit peptide targeting the mitochondrion. S14 and S19 each carry phosphoserine. Residue K32 is modified to N6-acetyllysine; alternate. Residue K32 is modified to N6-succinyllysine; alternate. K66 carries the post-translational modification N6-acetyllysine. 3 residues coordinate Fe cation: H79, H135, and D154.

This sequence belongs to the metallo-beta-lactamase superfamily. Glyoxalase II family. As to quaternary structure, homodimer. Monomer. Interacts with TST. May interact with RELA. Fe(2+) serves as cofactor.

Its subcellular location is the cytoplasm. It localises to the nucleus. It is found in the mitochondrion matrix. The catalysed reaction is S-sulfanylglutathione + O2 + H2O = sulfite + glutathione + 2 H(+). Its activity is regulated as follows. Glutathione increases enzyme activity. Its function is as follows. Sulfur dioxygenase that plays an essential role in hydrogen sulfide catabolism in the mitochondrial matrix. Hydrogen sulfide (H(2)S) is first oxidized by SQRDL, giving rise to cysteine persulfide residues. ETHE1 consumes molecular oxygen to catalyze the oxidation of the persulfide, once it has been transferred to a thiophilic acceptor, such as glutathione (R-SSH). Plays an important role in metabolic homeostasis in mitochondria by metabolizing hydrogen sulfide and preventing the accumulation of supraphysiological H(2)S levels that have toxic effects, due to the inhibition of cytochrome c oxidase. First described as a protein that can shuttle between the nucleus and the cytoplasm and suppress p53-induced apoptosis by sequestering the transcription factor RELA/NFKB3 in the cytoplasm and preventing its accumulation in the nucleus. In Bos taurus (Bovine), this protein is Persulfide dioxygenase ETHE1, mitochondrial (ETHE1).